A 96-amino-acid chain; its full sequence is NADH-quinone oxidoreductase subunit K (96 aa).

Transmembrane regions (helical) follow at residues 1 to 21, 25 to 45, and 56 to 76; these read MNYI…VLVR, IIVF…FVAF, and VIAF…LAII.

This sequence belongs to the complex I subunit 4L family. In terms of assembly, NDH-1 is composed of 14 different subunits. Subunits NuoA, H, J, K, L, M, N constitute the membrane sector of the complex.

The protein resides in the cell membrane. The enzyme catalyses a quinone + NADH + 5 H(+)(in) = a quinol + NAD(+) + 4 H(+)(out). Its function is as follows. NDH-1 shuttles electrons from NADH, via FMN and iron-sulfur (Fe-S) centers, to quinones in the respiratory chain. The immediate electron acceptor for the enzyme in this species is believed to be a menaquinone. Couples the redox reaction to proton translocation (for every two electrons transferred, four hydrogen ions are translocated across the cytoplasmic membrane), and thus conserves the redox energy in a proton gradient. This is NADH-quinone oxidoreductase subunit K from Thermobifida fusca (strain YX).